The primary structure comprises 83 residues: Cytochrome b559 subunit alpha (83 aa).

Residues 21-35 (VIHSITIPSLFIAGW) form a helical membrane-spanning segment. His-23 lines the heme pocket.

It belongs to the PsbE/PsbF family. In terms of assembly, heterodimer of an alpha subunit and a beta subunit. PSII is composed of 1 copy each of membrane proteins PsbA, PsbB, PsbC, PsbD, PsbE, PsbF, PsbH, PsbI, PsbJ, PsbK, PsbL, PsbM, PsbT, PsbX, PsbY, PsbZ, Psb30/Ycf12, at least 3 peripheral proteins of the oxygen-evolving complex and a large number of cofactors. It forms dimeric complexes. It depends on heme b as a cofactor.

It is found in the plastid. The protein resides in the chloroplast thylakoid membrane. In terms of biological role, this b-type cytochrome is tightly associated with the reaction center of photosystem II (PSII). PSII is a light-driven water:plastoquinone oxidoreductase that uses light energy to abstract electrons from H(2)O, generating O(2) and a proton gradient subsequently used for ATP formation. It consists of a core antenna complex that captures photons, and an electron transfer chain that converts photonic excitation into a charge separation. This Acorus calamus (Sweet flag) protein is Cytochrome b559 subunit alpha.